A 513-amino-acid chain; its full sequence is Putative thymidine phosphorylase (513 aa).

Belongs to the thymidine/pyrimidine-nucleoside phosphorylase family. Type 2 subfamily.

It carries out the reaction thymidine + phosphate = 2-deoxy-alpha-D-ribose 1-phosphate + thymine. The sequence is that of Putative thymidine phosphorylase from Bradyrhizobium diazoefficiens (strain JCM 10833 / BCRC 13528 / IAM 13628 / NBRC 14792 / USDA 110).